A 430-amino-acid chain; its full sequence is Adenylosuccinate synthetase (430 aa).

GTP is bound by residues Gly-12 to Lys-18 and Gly-40 to Thr-42. Catalysis depends on Asp-13, which acts as the Proton acceptor. 2 residues coordinate Mg(2+): Asp-13 and Gly-40. Residues Asp-13–Lys-16, Asn-38–His-41, Thr-129, Arg-143, Gln-223, Thr-238, and Arg-302 each bind IMP. The active-site Proton donor is the His-41. Substrate is bound at residue Thr-298 to Arg-304. GTP is bound by residues Arg-304, Lys-330–Asp-332, and Ser-412–Gly-414.

It belongs to the adenylosuccinate synthetase family. As to quaternary structure, homodimer. Requires Mg(2+) as cofactor.

The protein resides in the cytoplasm. It catalyses the reaction IMP + L-aspartate + GTP = N(6)-(1,2-dicarboxyethyl)-AMP + GDP + phosphate + 2 H(+). Its pathway is purine metabolism; AMP biosynthesis via de novo pathway; AMP from IMP: step 1/2. Its function is as follows. Plays an important role in the de novo pathway of purine nucleotide biosynthesis. Catalyzes the first committed step in the biosynthesis of AMP from IMP. This Desulforudis audaxviator (strain MP104C) protein is Adenylosuccinate synthetase.